A 128-amino-acid polypeptide reads, in one-letter code: Large ribosomal subunit protein eL22 (128 aa).

It belongs to the eukaryotic ribosomal protein eL22 family. Component of the large ribosomal subunit.

The protein localises to the cytoplasm. In terms of biological role, component of the large ribosomal subunit. The ribosome is a large ribonucleoprotein complex responsible for the synthesis of proteins in the cell. This Gallus gallus (Chicken) protein is Large ribosomal subunit protein eL22 (RPL22).